Consider the following 272-residue polypeptide: uncharacterized protein (272 aa).

The first 20 residues, 1–20 (MKLRKIFLLPLISLSTLSVA), serve as a signal peptide directing secretion. The N-palmitoyl cysteine moiety is linked to residue cysteine 21. A lipid anchor (S-diacylglycerol cysteine) is attached at cysteine 21.

This sequence belongs to the MG439/MG440 family.

The protein resides in the cell membrane. This is an uncharacterized protein from Mycoplasma genitalium (strain ATCC 33530 / DSM 19775 / NCTC 10195 / G37) (Mycoplasmoides genitalium).